Consider the following 132-residue polypeptide: Small ribosomal subunit protein uS8 (132 aa).

It belongs to the universal ribosomal protein uS8 family. As to quaternary structure, part of the 30S ribosomal subunit. Contacts proteins S5 and S12.

One of the primary rRNA binding proteins, it binds directly to 16S rRNA central domain where it helps coordinate assembly of the platform of the 30S subunit. The polypeptide is Small ribosomal subunit protein uS8 (Mesorhizobium japonicum (strain LMG 29417 / CECT 9101 / MAFF 303099) (Mesorhizobium loti (strain MAFF 303099))).